The primary structure comprises 808 residues: MSSELSEGELSHTSSSSSFVPVDQRQLQDAIQIINEEKRFNQSVLEYINKTAPADVGNNYHIISVFGSQSTGKSTLLNKLFNTNFDVMDESNRQQTTKGIWLAFSPVVSTTSGHTSSKSNILVMDVEGTDGRERGEDQDFERKAALFALSTSEILIINIWETQVGLYQGANMGLLKTVFEVNLSLFGKSKLEKHDDHKVLLLIVIRDYVGVTPVESLAKTFTQDLINMWASLAKPAELEHLQFADFFDVDFHALNHKVLQPKEFSEGINKLGDRLVVGDELFKPEYHHQVPIDGWVMYAGNCWEQIETNKDLDLPTQQILVAQFKCDEIVENVFQEFLKKFEQLFGEPQAEPDYEQIGALFSDLRNDTLEDYDISASKYNKSVYEQKRVKLISLVNEKFKEVFDFYAKELSSTMLKKFHSDVVALKGKNFAASVKELSTGLIASIVTTLGLISLQGDLSSNEVTTALSKDIADIVSKQQVIELNSIVNRAVKKLTNSLSKSIQFELGDPNENTWDTVLQQFNSLSQEVLTKYDGDFGLGTTDEQNKQALDRFQFKSWTSFYESMHKLISKEKLLVLLQDRFDDVFRYDENGLPKLYLNEADLEKTFTESKQHALKVLPILTIAKLSDGSEIVPEIDIFDHKLREKYLGVADEDSDDEDDDEHCFAEIVTEQEKSEVLAKFKKEVDAKYIETKRSIVQHITQIPYYIYLVIVFLGWNEFMAIIRNPLLFSLALLLGASVYILYKLNLLKPAIVVAQRTFDETVAMGKEKLREILIDDHETQGRNLGKIAGKNPSAPAEEYSDNIELDDM.

Residues 1-21 (MSSELSEGELSHTSSSSSFVP) are disordered. Residues 1–701 (MSSELSEGEL…KRSIVQHITQ (701 aa)) lie on the Cytoplasmic side of the membrane. Residues 57–286 (GNNYHIISVF…VGDELFKPEY (230 aa)) form the GB1/RHD3-type G domain. 67-74 (GSQSTGKS) provides a ligand contact to GTP. Residues 702-722 (IPYYIYLVIVFLGWNEFMAII) form a helical membrane-spanning segment. Residues 723 to 725 (RNP) lie on the Lumenal side of the membrane. Residues 726–746 (LLFSLALLLGASVYILYKLNL) traverse the membrane as a helical segment. Topologically, residues 747–808 (LKPAIVVAQR…YSDNIELDDM (62 aa)) are cytoplasmic.

It belongs to the TRAFAC class dynamin-like GTPase superfamily. GB1/RHD3 GTPase family. RHD3 subfamily.

The protein resides in the endoplasmic reticulum membrane. In terms of biological role, cooperates with the reticulon proteins and tubule-shaping DP1 family proteins to generate and maintain the structure of the tubular endoplasmic reticulum network. Has GTPase activity, which is required for its function in ER organization. The sequence is that of Protein SEY1 from Candida tropicalis (strain ATCC MYA-3404 / T1) (Yeast).